The sequence spans 249 residues: Putative [LysW]-aminoadipate/[LysW]-glutamate kinase (249 aa).

The substrate site is built by arginine 63 and asparagine 166.

The protein belongs to the acetylglutamate kinase family. LysZ subfamily.

Its subcellular location is the cytoplasm. It carries out the reaction [amino-group carrier protein]-C-terminal-N-(1,4-dicarboxybutan-1-yl)-L-glutamine + ATP = [amino-group carrier protein]-C-terminal-N-(1-carboxy-5-phosphooxy-5-oxopentan-1-yl)-L-glutamine + ADP. It catalyses the reaction [amino-group carrier protein]-C-terminal-gamma-(L-glutamyl)-L-glutamate + ATP = [amino-group carrier protein]-C-terminal-gamma-(5-phospho-L-glutamyl)-L-glutamate + ADP. It participates in amino-acid biosynthesis; L-lysine biosynthesis via AAA pathway; L-lysine from L-alpha-aminoadipate (Thermus route): step 2/5. It functions in the pathway amino-acid biosynthesis; L-arginine biosynthesis. Involved in both the arginine and lysine biosynthetic pathways. Phosphorylates the LysW-bound precursors glutamate (for arginine biosynthesis), respectively alpha-aminoadipate (for lysine biosynthesis). The chain is Putative [LysW]-aminoadipate/[LysW]-glutamate kinase from Pyrococcus furiosus (strain ATCC 43587 / DSM 3638 / JCM 8422 / Vc1).